The sequence spans 1329 residues: DNA translocase FtsK (1329 aa).

Residues 1–24 (MSQEYIEDKEVTLTKLSSGRRLLE) lie on the Cytoplasmic side of the membrane. The chain crosses the membrane as a helical span at residues 25–44 (ALLILIVLFAVWLMAALLSF). The Periplasmic segment spans residues 45–74 (NPSDPSWSQTAWHEPIHNLGGMPGAWLADT). A helical transmembrane segment spans residues 75–98 (LFFIFGVMAYTIPVIIVGGCWFAW). Residues 99 to 115 (RHQSSDEYIDYFAVSLR) lie on the Cytoplasmic side of the membrane. The chain crosses the membrane as a helical span at residues 116 to 132 (IIGVLALILTSCGLAAI). Residues 133–162 (NADDIWYFASGGVIGSLLSTTLQPLLHSSG) are Periplasmic-facing. A helical membrane pass occupies residues 163–179 (GTIALLCVWAAGLTLFT). Residues 180–1329 (GWSWVTIAEK…REVLAPPPFD (1150 aa)) are Cytoplasmic-facing. The segment at 184-817 (VTIAEKLGGW…QQPVAPQPQD (634 aa)) is linker. Disordered regions lie at residues 351-386 (VPPA…QSQY), 434-489 (WQAE…TKPA), 577-596 (NSGG…LPRP), 604-639 (RREL…DQYN), 688-712 (RQFA…FSLD), and 741-849 (QPQQ…LTPP). A compositionally biased stretch (polar residues) spans 437 to 448 (EEQQSTFAPQST). A compositionally biased stretch (low complexity) spans 449 to 480 (YQTEQTYQQPAAQEPLYQQPQPVEQQPVVEPE). The segment covering 619–628 (AAEEKAREAQ) has biased composition (basic and acidic residues). Polar residues predominate over residues 690-699 (FAQTQQQRYS). 3 stretches are compositionally biased toward low complexity: residues 741–756 (QPQQ…QQPQ), 764–816 (QYQQ…PQPQ), and 836–846 (PTTPLPSLDLL). Positions 818–943 (TLLHPLLMRN…VGLELPNKKR (126 aa)) are alpha. Positions 944 to 1258 (QTVYLREVLD…DSESEGGAGG (315 aa)) are beta. The region spanning 974-1187 (GEPVVADLAK…FTVSSKIDSR (214 aa)) is the FtsK domain. 994 to 999 (GSGKSV) contacts ATP. The tract at residues 1259–1329 (FDGAEELDPL…REVLAPPPFD (71 aa)) is gamma.

Belongs to the FtsK/SpoIIIE/SftA family. In terms of assembly, homohexamer. Forms a ring that surrounds DNA. Interacts with FtsZ, FtsQ, FtsL and FtsI.

It is found in the cell inner membrane. Functionally, essential cell division protein that coordinates cell division and chromosome segregation. The N-terminus is involved in assembly of the cell-division machinery. The C-terminus functions as a DNA motor that moves dsDNA in an ATP-dependent manner towards the dif recombination site, which is located within the replication terminus region. Translocation stops specifically at Xer-dif sites, where FtsK interacts with the Xer recombinase, allowing activation of chromosome unlinking by recombination. FtsK orienting polar sequences (KOPS) guide the direction of DNA translocation. FtsK can remove proteins from DNA as it translocates, but translocation stops specifically at XerCD-dif site, thereby preventing removal of XerC and XerD from dif. Stoppage of translocation is accompanied by a reduction in ATPase activity. Also stimulates topoisomerase 4 activity. Required for the targeting of FtsQ, FtsL and FtsI to the septum. The sequence is that of DNA translocase FtsK (ftsK) from Escherichia coli (strain K12).